A 389-amino-acid chain; its full sequence is Na(+)/H(+) antiporter NhaA (389 aa).

The next 11 helical transmembrane spans lie at 17-37 (ILLL…LAGL), 59-79 (LLLW…GLEV), 95-115 (SLPT…YLLF), 124-144 (VGWA…MALL), 154-174 (VFLL…IALF), 177-197 (SDLS…LVAL), 213-233 (LVLW…GVII), 261-281 (FLIL…NMSL), 287-307 (PVPV…VMLF), 328-348 (IAPV…IASL), and 363-383 (LGTL…LSKV).

The protein belongs to the NhaA Na(+)/H(+) (TC 2.A.33) antiporter family.

It localises to the cell inner membrane. It carries out the reaction Na(+)(in) + 2 H(+)(out) = Na(+)(out) + 2 H(+)(in). Functionally, na(+)/H(+) antiporter that extrudes sodium in exchange for external protons. This is Na(+)/H(+) antiporter NhaA from Shewanella sp. (strain ANA-3).